We begin with the raw amino-acid sequence, 371 residues long: Carnitine monooxygenase oxygenase subunit (371 aa).

In terms of domain architecture, Rieske spans 44–152 (WICVAHGSEL…VEEYAGFVFI (109 aa)). Residues Cys-86, His-88, Cys-106, and His-109 each coordinate [2Fe-2S] cluster. The Fe cation site is built by His-208, His-213, and Asp-323.

Belongs to the bacterial ring-hydroxylating dioxygenase alpha subunit family. CntA subfamily. As to quaternary structure, composed of an oxygenase subunit and a reductase subunit. Requires [2Fe-2S] cluster as cofactor. Fe cation serves as cofactor.

It catalyses the reaction (R)-carnitine + NADH + O2 + H(+) = (3R)-3-hydroxy-4-oxobutanoate + trimethylamine + NAD(+) + H2O. The catalysed reaction is (R)-carnitine + NADPH + O2 + H(+) = (3R)-3-hydroxy-4-oxobutanoate + trimethylamine + NADP(+) + H2O. The protein operates within amine and polyamine metabolism; carnitine metabolism. Its activity is regulated as follows. Inhibited by EDTA. Converts carnitine to trimethylamine and malic semialdehyde. Acts on both enantiomers. This is Carnitine monooxygenase oxygenase subunit from Acinetobacter pittii (strain PHEA-2).